The chain runs to 394 residues: MSKEKFERTKPHVNVGTIGHVDHGKTTLTAAITTVLAKTYGGSARAFDQIDNAPEEKARGITINTSHVEYDTPSRHYAHVDCPGHADYVKNMITGAAQMDGAILVVAATDGPMPQTREHILLGRQVGVPFIIVFLNKCDMVDDEELLELVEMEVRELLSQYDFPGDDTPIIRGSALKALEGEAEWEAKIVELAGYLDSYIPEPERAIDKPFLLPIEDVFSISGRGTVVTGRVERGIVKVGEEVEIVGIKETAKSTCTGVEMFRKLLDEGRAGENVGVLLRGIKREEIERGQVLAKPGSIKPHTKFESEVYILSKDEGGRHTPFFKGYRPQFYFRTTDVTGTIELPEGVEMVMPGDNIQMVVTLIHPIAMDDGLRFAIREGGRTVGAGVVAKVIS.

One can recognise a tr-type G domain in the interval lysine 10–glutamate 204. Residues glycine 19–threonine 26 form a G1 region. Glycine 19–threonine 26 lines the GTP pocket. Threonine 26 is a Mg(2+) binding site. The G2 stretch occupies residues glycine 60–asparagine 64. Residues aspartate 81–glycine 84 form a G3 region. GTP-binding positions include aspartate 81–histidine 85 and asparagine 136–aspartate 139. The tract at residues asparagine 136–aspartate 139 is G4. The G5 stretch occupies residues serine 174 to leucine 176.

The protein belongs to the TRAFAC class translation factor GTPase superfamily. Classic translation factor GTPase family. EF-Tu/EF-1A subfamily. Monomer.

The protein resides in the cytoplasm. It catalyses the reaction GTP + H2O = GDP + phosphate + H(+). Its function is as follows. GTP hydrolase that promotes the GTP-dependent binding of aminoacyl-tRNA to the A-site of ribosomes during protein biosynthesis. The chain is Elongation factor Tu from Enterobacter sp. (strain 638).